The primary structure comprises 212 residues: Adenylate kinase (212 aa).

10–15 (GAGKGT) contacts ATP. An NMP region spans residues 30–59 (STGDMFRAAMANQTEMGVLAKSYIDKGELV). AMP-binding positions include threonine 31, arginine 36, 57–59 (ELV), 86–89 (GYPR), and glutamine 93. The segment at 127 to 159 (GRIIHRVTGETFHKVFNPPVDYKEEDYYQREDD) is LID. Residues arginine 128 and 137–138 (TF) each bind ATP. AMP contacts are provided by arginine 156 and arginine 167. ATP is bound at residue glutamine 195.

Belongs to the adenylate kinase family. As to quaternary structure, monomer.

It is found in the cytoplasm. The enzyme catalyses AMP + ATP = 2 ADP. It functions in the pathway purine metabolism; AMP biosynthesis via salvage pathway; AMP from ADP: step 1/1. Catalyzes the reversible transfer of the terminal phosphate group between ATP and AMP. Plays an important role in cellular energy homeostasis and in adenine nucleotide metabolism. The polypeptide is Adenylate kinase (Streptococcus pneumoniae serotype 4 (strain ATCC BAA-334 / TIGR4)).